Consider the following 715-residue polypeptide: Phosphoribosylformylglycinamidine synthase subunit PurL (715 aa).

The active site involves histidine 33. Tyrosine 36 contacts ATP. Glutamate 77 is a Mg(2+) binding site. Residues 78–81 (SHNH) and arginine 100 contribute to the substrate site. The Proton acceptor role is filled by histidine 79. Aspartate 101 is a binding site for Mg(2+). Substrate is bound at residue glutamine 225. Aspartate 253 lines the Mg(2+) pocket. 297-299 (ESQ) contacts substrate. ATP contacts are provided by asparagine 476 and glycine 513. Asparagine 514 serves as a coordination point for Mg(2+). Residue serine 516 coordinates substrate.

Belongs to the FGAMS family. In terms of assembly, monomer. Part of the FGAM synthase complex composed of 1 PurL, 1 PurQ and 2 PurS subunits.

The protein resides in the cytoplasm. The catalysed reaction is N(2)-formyl-N(1)-(5-phospho-beta-D-ribosyl)glycinamide + L-glutamine + ATP + H2O = 2-formamido-N(1)-(5-O-phospho-beta-D-ribosyl)acetamidine + L-glutamate + ADP + phosphate + H(+). Its pathway is purine metabolism; IMP biosynthesis via de novo pathway; 5-amino-1-(5-phospho-D-ribosyl)imidazole from N(2)-formyl-N(1)-(5-phospho-D-ribosyl)glycinamide: step 1/2. Part of the phosphoribosylformylglycinamidine synthase complex involved in the purines biosynthetic pathway. Catalyzes the ATP-dependent conversion of formylglycinamide ribonucleotide (FGAR) and glutamine to yield formylglycinamidine ribonucleotide (FGAM) and glutamate. The FGAM synthase complex is composed of three subunits. PurQ produces an ammonia molecule by converting glutamine to glutamate. PurL transfers the ammonia molecule to FGAR to form FGAM in an ATP-dependent manner. PurS interacts with PurQ and PurL and is thought to assist in the transfer of the ammonia molecule from PurQ to PurL. The sequence is that of Phosphoribosylformylglycinamidine synthase subunit PurL from Methanosarcina barkeri (strain Fusaro / DSM 804).